Consider the following 501-residue polypeptide: G protein-activated inward rectifier potassium channel 1 (501 aa).

A disordered region spans residues Met1–Lys40. The Cytoplasmic segment spans residues Met1 to Trp80. The segment covering Ser18 to Val38 has biased composition (low complexity). A helical membrane pass occupies residues Arg81–Ile105. Residues Ala106–Asn129 are Extracellular-facing. An N-linked (GlcNAc...) asparagine glycan is attached at Asn119. Residues Phe130–Glu141 constitute an intramembrane region (helical; Pore-forming). Positions Ala142–Tyr148 form an intramembrane region, pore-forming. The Selectivity filter motif lies at Thr143–Tyr148. The Extracellular portion of the chain corresponds to Arg149–Glu157. A helical transmembrane segment spans residues Gly158 to Cys179. Residues Met180 to Thr501 lie on the Cytoplasmic side of the membrane. Residues Ile182 to Leu209 are polyphosphoinositide (PIP2)-binding. Residues Ser385 and Ser424 each carry the phosphoserine modification.

The protein belongs to the inward rectifier-type potassium channel (TC 1.A.2.1) family. KCNJ3 subfamily. As to quaternary structure, associates with KCNJ5/GIRK4 or KCNJ6/GIRK2 to form a G-protein activated heteromultimer pore-forming unit. The resulting inward current is much larger. Associates with KCNJ9/GIRK3 to form a G-protein activated heteromultimer pore-forming unit.

It is found in the membrane. It carries out the reaction K(+)(in) = K(+)(out). With respect to regulation, heteromultimer composed of KCNJ3/GIRK1 and KCNJ5/GIRK4 is activated by phosphatidylinositol 4,5 biphosphate (PtdIns(4,5)P2). Functionally, inward rectifier potassium channels are characterized by a greater tendency to allow potassium to flow into the cell rather than out of it. Their voltage dependence is regulated by the concentration of extracellular potassium; as external potassium is raised, the voltage range of the channel opening shifts to more positive voltages. The inward rectification is mainly due to the blockage of outward current by internal magnesium. This potassium channel is controlled by G proteins. This receptor plays a crucial role in regulating the heartbeat. This is G protein-activated inward rectifier potassium channel 1 (KCNJ3) from Homo sapiens (Human).